The primary structure comprises 156 residues: uncharacterized protein (156 aa).

Residues 1–12 (MSARPSLPPLPA) are compositionally biased toward pro residues. Disordered stretches follow at residues 1–89 (MSAR…PPPA) and 129–156 (PLSPPAKRRGIRTWGHPSYLTPSPTMRD). Basic and acidic residues predominate over residues 49-67 (ARAEEAGGEEGKREAEAWT).

This is an uncharacterized protein from Homo sapiens (Human).